Reading from the N-terminus, the 286-residue chain is Alpha-ketoglutarate-dependent dioxygenase alkB homolog 3 (286 aa).

Residues M1–E46 form a disordered region. The segment covering P17–A38 has biased composition (polar residues). Substrate-binding positions include W115 and Y141–Y143. The region spanning T172–Y278 is the Fe2OG dioxygenase domain. A (4R)-5-hydroxyleucine; alternate modification is found at L177. L177 carries the (4R)-5-oxoleucine; alternate modification. N179–Y181 provides a ligand contact to 2-oxoglutarate. Fe cation is bound by residues H191 and D193. Residue D194 coordinates substrate. Fe cation is bound at residue H257. 2-oxoglutarate-binding positions include R269–R275 and R275.

This sequence belongs to the alkB family. Interacts with the ASCC complex composed of ASCC1, ASCC2 and ASCC3. Interacts directly with ASCC3, and is thereby recruited to the ASCC complex. Interacts with OTUD4; the interaction is direct. Interacts with USP7 and USP9X. The cofactor is Fe(2+). Ubiquitinated; undergoes 'Lys-48'-linked polyubiquitination. OTUD4 promotes USP7 and USP9X-dependent deubiquitination of 'Lys-48'-polyubiquitinated ALKBH3 promoting the repair of alkylated DNA lesions. Detected in testis, kidney, liver and heart.

Its subcellular location is the nucleus. The protein resides in the cytoplasm. It carries out the reaction an N(1)-methyladenosine in mRNA + 2-oxoglutarate + O2 = an adenosine in mRNA + formaldehyde + succinate + CO2. The enzyme catalyses a methylated nucleobase within DNA + 2-oxoglutarate + O2 = a nucleobase within DNA + formaldehyde + succinate + CO2. It catalyses the reaction an N(1)-methyl-2'-deoxyadenosine in single-stranded DNA + 2-oxoglutarate + O2 = a 2'-deoxyadenosine in single-stranded DNA + formaldehyde + succinate + CO2 + H(+). The catalysed reaction is an N(3)-methyl-2'-deoxycytidine in single-stranded DNA + 2-oxoglutarate + O2 = a 2'-deoxycytidine in single-stranded DNA + formaldehyde + succinate + CO2 + H(+). It carries out the reaction a 3,N(4)-etheno-2'-deoxycytidine in single-stranded DNA + 2-oxoglutarate + O2 + H2O = a 2'-deoxycytidine in single-stranded DNA + glyoxal + succinate + CO2. Its activity is regulated as follows. Activated by ascorbate. In terms of biological role, dioxygenase that mediates demethylation of DNA and RNA containing 1-methyladenosine (m1A). Repairs alkylated DNA containing 1-methyladenosine (m1A) and 3-methylcytosine (m3C) by oxidative demethylation. Has a strong preference for single-stranded DNA. Able to process alkylated m3C within double-stranded regions via its interaction with ASCC3, which promotes DNA unwinding to generate single-stranded substrate needed for ALKBH3. Can repair exocyclic 3,N4-ethenocytosine adducs in single-stranded DNA. Also acts on RNA. Demethylates N(1)-methyladenosine (m1A) RNA, an epigenetic internal modification of messenger RNAs (mRNAs) highly enriched within 5'-untranslated regions (UTRs) and in the vicinity of start codons. Requires molecular oxygen, alpha-ketoglutarate and iron. This chain is Alpha-ketoglutarate-dependent dioxygenase alkB homolog 3, found in Mus musculus (Mouse).